Reading from the N-terminus, the 435-residue chain is 3-phosphoshikimate 1-carboxyvinyltransferase (435 aa).

The 3-phosphoshikimate site is built by Lys-21, Ser-22, and Arg-26. Lys-21 serves as a coordination point for phosphoenolpyruvate. Phosphoenolpyruvate is bound by residues Gly-98 and Arg-126. Residues Ser-169, Ser-170, Gln-171, Ser-197, Asp-312, and Lys-339 each coordinate 3-phosphoshikimate. Phosphoenolpyruvate is bound at residue Gln-171. Residue Asp-312 is the Proton acceptor of the active site. Phosphoenolpyruvate contacts are provided by Arg-343, Arg-386, and Lys-412.

The protein belongs to the EPSP synthase family. Monomer.

The protein resides in the cytoplasm. The enzyme catalyses 3-phosphoshikimate + phosphoenolpyruvate = 5-O-(1-carboxyvinyl)-3-phosphoshikimate + phosphate. Its pathway is metabolic intermediate biosynthesis; chorismate biosynthesis; chorismate from D-erythrose 4-phosphate and phosphoenolpyruvate: step 6/7. Catalyzes the transfer of the enolpyruvyl moiety of phosphoenolpyruvate (PEP) to the 5-hydroxyl of shikimate-3-phosphate (S3P) to produce enolpyruvyl shikimate-3-phosphate and inorganic phosphate. This Clostridium beijerinckii (strain ATCC 51743 / NCIMB 8052) (Clostridium acetobutylicum) protein is 3-phosphoshikimate 1-carboxyvinyltransferase.